The following is a 612-amino-acid chain: uncharacterized protein (612 aa).

The zn(2)-C6 fungal-type DNA-binding region spans 6–32 (CLYCRRRKIKCDKNRPCHNCFVAKREC).

The protein resides in the cytoplasm. The protein localises to the nucleus. This is an uncharacterized protein from Schizosaccharomyces pombe (strain 972 / ATCC 24843) (Fission yeast).